The primary structure comprises 661 residues: Meiotic coiled-coil protein 1 (661 aa).

5 coiled-coil regions span residues 38-78, 100-121, 143-184, 304-320, and 360-387; these read LDAL…IIEE, RAIY…ERLS, DIKL…LSIK, ELIQ…EVDL, and LKRL…DNEK. 3 disordered regions span residues 410 to 446, 467 to 562, and 573 to 592; these read QNQE…LRNI, LIDR…TPAS, and LSRT…TPTQ. A compositionally biased stretch (low complexity) spans 414 to 430; sequence NISSNDNSKSSPESSPP. The span at 436-445 shows a compositional bias: basic and acidic residues; the sequence is GKIENKKLRN. 3 stretches are compositionally biased toward polar residues: residues 472–481, 548–562, and 582–592; these read VNQSPDTRSV, HNSV…TPAS, and FTNSLDDTPTQ.

The sequence is that of Meiotic coiled-coil protein 1 (mcp1) from Schizosaccharomyces pombe (strain 972 / ATCC 24843) (Fission yeast).